The chain runs to 66 residues: Large ribosomal subunit protein uL29 (66 aa).

Belongs to the universal ribosomal protein uL29 family.

The polypeptide is Large ribosomal subunit protein uL29 (Petrotoga mobilis (strain DSM 10674 / SJ95)).